The primary structure comprises 702 residues: Epsin-1 (702 aa).

The ENTH domain occupies 10-142 (NFSKGYTDTQ…EDEHALKEAR (133 aa)). 2 stretches are compositionally biased toward basic and acidic residues: residues 136 to 160 (HALKEARGDSRERDRDRDRTRSSRF) and 183 to 192 (SRYDDDDRDH). The interval 136–285 (HALKEARGDS…HQREREQQEQ (150 aa)) is disordered. Residues 193-214 (RSRRRSRSRRPGRSRSRRRSRR) show a composition bias toward basic residues. Residues Ser-212, Ser-216, Ser-218, and Ser-223 each carry the phosphoserine modification. UIM domains lie at 226–245 (ENDPELQRVIEESKRQAEED) and 254–273 (DSEAELQKAIQLSKEEDEAR). Basic and acidic residues predominate over residues 230-248 (ELQRVIEESKRQAEEDAKR). The residue at position 255 (Ser-255) is a Phosphoserine. Basic and acidic residues predominate over residues 266 to 283 (SKEEDEARQRHQREREQQ). A Phosphothreonine modification is found at Thr-406. Disordered stretches follow at residues 504–589 (NHTG…RTGD) and 683–702 (PMQGMQQQSMQPQVGSLIDL). Polar residues predominate over residues 514–534 (TGLQRQTTGYTGNNNPYSRPL). Residues 535–549 (QSQSTGILQQQQQQS) are compositionally biased toward low complexity. Positions 557–577 (KTGSNNPFAQFSNLPSQSTAP) are enriched in polar residues. The span at 683–695 (PMQGMQQQSMQPQ) shows a compositional bias: low complexity.

It belongs to the epsin family.

The protein localises to the cytoplasm. Its subcellular location is the membrane. Functionally, binds to membranes enriched in phosphatidylinositol 3,5-bisphosphate (PtdIns(3,5)P2) and phosphatidylinositol 4,5-bisphosphate (PtdIns(4,5)P2). Required for endocytosis and localization of actin. The sequence is that of Epsin-1 (ent1) from Schizosaccharomyces pombe (strain 972 / ATCC 24843) (Fission yeast).